A 296-amino-acid chain; its full sequence is 4-hydroxy-tetrahydrodipicolinate synthase (296 aa).

Threonine 50 contributes to the pyruvate binding site. Tyrosine 138 (proton donor/acceptor) is an active-site residue. Lysine 166 functions as the Schiff-base intermediate with substrate in the catalytic mechanism. Isoleucine 208 is a pyruvate binding site.

It belongs to the DapA family. In terms of assembly, homotetramer; dimer of dimers.

The protein localises to the cytoplasm. It carries out the reaction L-aspartate 4-semialdehyde + pyruvate = (2S,4S)-4-hydroxy-2,3,4,5-tetrahydrodipicolinate + H2O + H(+). It functions in the pathway amino-acid biosynthesis; L-lysine biosynthesis via DAP pathway; (S)-tetrahydrodipicolinate from L-aspartate: step 3/4. In terms of biological role, catalyzes the condensation of (S)-aspartate-beta-semialdehyde [(S)-ASA] and pyruvate to 4-hydroxy-tetrahydrodipicolinate (HTPA). This Thiobacillus denitrificans (strain ATCC 25259 / T1) protein is 4-hydroxy-tetrahydrodipicolinate synthase.